The sequence spans 245 residues: 4-hydroxy-tetrahydrodipicolinate reductase (245 aa).

Residues 7–12 (GAKGKV), 75–77 (GTT), and 102–105 (APNF) contribute to the NAD(+) site. His132 serves as the catalytic Proton donor/acceptor. Residue His133 coordinates (S)-2,3,4,5-tetrahydrodipicolinate. Lys136 (proton donor) is an active-site residue. 142–143 (GT) serves as a coordination point for (S)-2,3,4,5-tetrahydrodipicolinate.

This sequence belongs to the DapB family.

Its subcellular location is the cytoplasm. It carries out the reaction (S)-2,3,4,5-tetrahydrodipicolinate + NAD(+) + H2O = (2S,4S)-4-hydroxy-2,3,4,5-tetrahydrodipicolinate + NADH + H(+). It catalyses the reaction (S)-2,3,4,5-tetrahydrodipicolinate + NADP(+) + H2O = (2S,4S)-4-hydroxy-2,3,4,5-tetrahydrodipicolinate + NADPH + H(+). The protein operates within amino-acid biosynthesis; L-lysine biosynthesis via DAP pathway; (S)-tetrahydrodipicolinate from L-aspartate: step 4/4. Its function is as follows. Catalyzes the conversion of 4-hydroxy-tetrahydrodipicolinate (HTPA) to tetrahydrodipicolinate. The sequence is that of 4-hydroxy-tetrahydrodipicolinate reductase from Mycobacterium tuberculosis (strain ATCC 25177 / H37Ra).